The following is a 359-amino-acid chain: Phospho-N-acetylmuramoyl-pentapeptide-transferase (359 aa).

10 consecutive transmembrane segments (helical) span residues Gln3–Ile23, Val55–Phe75, Gly84–Ile104, Thr117–Phe137, Ile156–Ser176, Leu187–Phe207, Leu231–Ala251, Ile255–Thr275, Leu280–Ile300, and Phe334–Leu354.

This sequence belongs to the glycosyltransferase 4 family. MraY subfamily. The cofactor is Mg(2+).

The protein localises to the cell membrane. The enzyme catalyses UDP-N-acetyl-alpha-D-muramoyl-L-alanyl-gamma-D-glutamyl-meso-2,6-diaminopimeloyl-D-alanyl-D-alanine + di-trans,octa-cis-undecaprenyl phosphate = di-trans,octa-cis-undecaprenyl diphospho-N-acetyl-alpha-D-muramoyl-L-alanyl-D-glutamyl-meso-2,6-diaminopimeloyl-D-alanyl-D-alanine + UMP. The protein operates within cell wall biogenesis; peptidoglycan biosynthesis. In terms of biological role, catalyzes the initial step of the lipid cycle reactions in the biosynthesis of the cell wall peptidoglycan: transfers peptidoglycan precursor phospho-MurNAc-pentapeptide from UDP-MurNAc-pentapeptide onto the lipid carrier undecaprenyl phosphate, yielding undecaprenyl-pyrophosphoryl-MurNAc-pentapeptide, known as lipid I. The protein is Phospho-N-acetylmuramoyl-pentapeptide-transferase of Mycobacteroides abscessus (strain ATCC 19977 / DSM 44196 / CCUG 20993 / CIP 104536 / JCM 13569 / NCTC 13031 / TMC 1543 / L948) (Mycobacterium abscessus).